Reading from the N-terminus, the 91-residue chain is UPF0250 protein PSEEN4821 (91 aa).

Belongs to the UPF0250 family.

This chain is UPF0250 protein PSEEN4821, found in Pseudomonas entomophila (strain L48).